A 234-amino-acid polypeptide reads, in one-letter code: Large ribosomal subunit protein uL1 (234 aa).

The protein belongs to the universal ribosomal protein uL1 family. Part of the 50S ribosomal subunit.

In terms of biological role, binds directly to 23S rRNA. The L1 stalk is quite mobile in the ribosome, and is involved in E site tRNA release. Functionally, protein L1 is also a translational repressor protein, it controls the translation of the L11 operon by binding to its mRNA. This chain is Large ribosomal subunit protein uL1, found in Aliivibrio fischeri (strain ATCC 700601 / ES114) (Vibrio fischeri).